The primary structure comprises 47 residues: PhoP/PhoQ regulator MgrB (47 aa).

A helical membrane pass occupies residues 6-26 (WVALVVVVLACLLLWAQVFNM).

The protein belongs to the MgrB family. As to quaternary structure, may form homooligomers. Probably interacts with the periplasmic domain of PhoQ.

The protein localises to the cell inner membrane. In terms of biological role, phoP-regulated transcription is redox-sensitive, being activated when the periplasm becomes more reducing. MgrB acts between DsbA/DsbB and PhoP/PhoQ in this pathway. Represses PhoP/PhoQ signaling, possibly by binding to the periplasmic domain of PhoQ, altering its activity and that of downstream effector PhoP. The protein is PhoP/PhoQ regulator MgrB of Escherichia coli O1:K1 / APEC.